Here is a 256-residue protein sequence, read N- to C-terminus: 1-(5-phosphoribosyl)-5-[(5-phosphoribosylamino)methylideneamino] imidazole-4-carboxamide isomerase (256 aa).

The active-site Proton acceptor is D8. D129 serves as the catalytic Proton donor.

This sequence belongs to the HisA/HisF family.

The protein localises to the cytoplasm. It catalyses the reaction 1-(5-phospho-beta-D-ribosyl)-5-[(5-phospho-beta-D-ribosylamino)methylideneamino]imidazole-4-carboxamide = 5-[(5-phospho-1-deoxy-D-ribulos-1-ylimino)methylamino]-1-(5-phospho-beta-D-ribosyl)imidazole-4-carboxamide. It functions in the pathway amino-acid biosynthesis; L-histidine biosynthesis; L-histidine from 5-phospho-alpha-D-ribose 1-diphosphate: step 4/9. This chain is 1-(5-phosphoribosyl)-5-[(5-phosphoribosylamino)methylideneamino] imidazole-4-carboxamide isomerase, found in Prochlorococcus marinus (strain NATL1A).